Consider the following 197-residue polypeptide: Peptidyl-tRNA hydrolase (197 aa).

Tyr-23 lines the tRNA pocket. Residue His-28 is the Proton acceptor of the active site. Residues Phe-73, Asn-75, and Asn-121 each coordinate tRNA.

Belongs to the PTH family. As to quaternary structure, monomer.

Its subcellular location is the cytoplasm. It catalyses the reaction an N-acyl-L-alpha-aminoacyl-tRNA + H2O = an N-acyl-L-amino acid + a tRNA + H(+). In terms of biological role, hydrolyzes ribosome-free peptidyl-tRNAs (with 1 or more amino acids incorporated), which drop off the ribosome during protein synthesis, or as a result of ribosome stalling. Its function is as follows. Catalyzes the release of premature peptidyl moieties from peptidyl-tRNA molecules trapped in stalled 50S ribosomal subunits, and thus maintains levels of free tRNAs and 50S ribosomes. The chain is Peptidyl-tRNA hydrolase from Frankia alni (strain DSM 45986 / CECT 9034 / ACN14a).